The sequence spans 273 residues: Flagellin FljM (273 aa).

This sequence belongs to the bacterial flagellin family. In terms of assembly, in C.crescentus, the flagellar filament is composed of multiple flagellins of 29 kDa; 27 kDa and 25 kDa.

The protein resides in the secreted. Its subcellular location is the bacterial flagellum. Its function is as follows. Flagellin is the subunit protein which polymerizes to form the filaments of bacterial flagella. This is Flagellin FljM (fljM) from Caulobacter vibrioides (strain ATCC 19089 / CIP 103742 / CB 15) (Caulobacter crescentus).